Here is a 279-residue protein sequence, read N- to C-terminus: NADH dehydrogenase [ubiquinone] iron-sulfur protein 3, mitochondrial (279 aa).

The N-terminal 27 residues, 1-27 (MISRTLLKRSLPTVQFLRPFTRSSIRR), are a transit peptide targeting the mitochondrion. The tract at residues 249–279 (EPVGEGKDFTPESFKLPTPEPEPEKESDEKK) is disordered. A compositionally biased stretch (basic and acidic residues) spans 270 to 279 (EPEKESDEKK).

This sequence belongs to the complex I 30 kDa subunit family. As to quaternary structure, core subunit of respiratory chain NADH dehydrogenase (Complex I).

It localises to the mitochondrion inner membrane. The catalysed reaction is a ubiquinone + NADH + 5 H(+)(in) = a ubiquinol + NAD(+) + 4 H(+)(out). Its function is as follows. Core subunit of the mitochondrial membrane respiratory chain NADH dehydrogenase (Complex I) which catalyzes electron transfer from NADH through the respiratory chain, using ubiquinone as an electron acceptor. Plays a role in cell wall integrity and is involved in osmotic and oxidative resistance, yeast to hypha transition and the ability to damage and invade oral epithelial cells. The sequence is that of NADH dehydrogenase [ubiquinone] iron-sulfur protein 3, mitochondrial (ALI1) from Candida albicans (strain SC5314 / ATCC MYA-2876) (Yeast).